The primary structure comprises 380 residues: Queuine tRNA-ribosyltransferase (380 aa).

D96 acts as the Proton acceptor in catalysis. Substrate contacts are provided by residues 96-100 (DSGGF), D150, Q193, and G220. The interval 251-257 (GVGAPDS) is RNA binding. The active-site Nucleophile is D270. The segment at 275–279 (TRIAR) is RNA binding; important for wobble base 34 recognition. Positions 308, 310, 313, and 339 each coordinate Zn(2+).

The protein belongs to the queuine tRNA-ribosyltransferase family. In terms of assembly, homodimer. Within each dimer, one monomer is responsible for RNA recognition and catalysis, while the other monomer binds to the replacement base PreQ1. The cofactor is Zn(2+).

The catalysed reaction is 7-aminomethyl-7-carbaguanine + guanosine(34) in tRNA = 7-aminomethyl-7-carbaguanosine(34) in tRNA + guanine. The protein operates within tRNA modification; tRNA-queuosine biosynthesis. In terms of biological role, catalyzes the base-exchange of a guanine (G) residue with the queuine precursor 7-aminomethyl-7-deazaguanine (PreQ1) at position 34 (anticodon wobble position) in tRNAs with GU(N) anticodons (tRNA-Asp, -Asn, -His and -Tyr). Catalysis occurs through a double-displacement mechanism. The nucleophile active site attacks the C1' of nucleotide 34 to detach the guanine base from the RNA, forming a covalent enzyme-RNA intermediate. The proton acceptor active site deprotonates the incoming PreQ1, allowing a nucleophilic attack on the C1' of the ribose to form the product. After dissociation, two additional enzymatic reactions on the tRNA convert PreQ1 to queuine (Q), resulting in the hypermodified nucleoside queuosine (7-(((4,5-cis-dihydroxy-2-cyclopenten-1-yl)amino)methyl)-7-deazaguanosine). This Streptococcus thermophilus (strain ATCC BAA-250 / LMG 18311) protein is Queuine tRNA-ribosyltransferase.